A 282-amino-acid polypeptide reads, in one-letter code: Pantothenate synthetase (282 aa).

An ATP-binding site is contributed by methionine 32–histidine 39. Histidine 39 functions as the Proton donor in the catalytic mechanism. Glutamine 63 contributes to the (R)-pantoate binding site. Glutamine 63 contacts beta-alanine. Glycine 149–aspartate 152 is a binding site for ATP. (R)-pantoate is bound at residue glutamine 155. ATP-binding positions include valine 178 and leucine 186–arginine 189.

This sequence belongs to the pantothenate synthetase family. In terms of assembly, homodimer.

The protein localises to the cytoplasm. The catalysed reaction is (R)-pantoate + beta-alanine + ATP = (R)-pantothenate + AMP + diphosphate + H(+). It functions in the pathway cofactor biosynthesis; (R)-pantothenate biosynthesis; (R)-pantothenate from (R)-pantoate and beta-alanine: step 1/1. Functionally, catalyzes the condensation of pantoate with beta-alanine in an ATP-dependent reaction via a pantoyl-adenylate intermediate. The chain is Pantothenate synthetase from Paracoccus denitrificans (strain Pd 1222).